The primary structure comprises 88 residues: Parvalbumin beta 3 (88 aa).

Residue Ala1 is modified to N-acetylalanine. The EF-hand domain maps to 31–66 (KSPEEVKKFFAIIDQDHSGFIEEEELKLFLQTFSAG). Asp44, Asp46, Ser48, Phe50, Glu52, Glu55, and Glu81 together coordinate Ca(2+).

Belongs to the parvalbumin family.

Its function is as follows. In muscle, parvalbumin is thought to be involved in relaxation after contraction. It binds two calcium ions. The protein is Parvalbumin beta 3 of Merluccius productus (North Pacific hake).